A 690-amino-acid polypeptide reads, in one-letter code: Elongation factor G (690 aa).

Positions 8 to 283 constitute a tr-type G domain; it reads EDYRNFGIMA…AVVDYLPSPL (276 aa). GTP is bound by residues 17-24, 81-85, and 135-138; these read AHIDAGKT, DTPGH, and NKMD.

It belongs to the TRAFAC class translation factor GTPase superfamily. Classic translation factor GTPase family. EF-G/EF-2 subfamily.

It is found in the cytoplasm. Its function is as follows. Catalyzes the GTP-dependent ribosomal translocation step during translation elongation. During this step, the ribosome changes from the pre-translocational (PRE) to the post-translocational (POST) state as the newly formed A-site-bound peptidyl-tRNA and P-site-bound deacylated tRNA move to the P and E sites, respectively. Catalyzes the coordinated movement of the two tRNA molecules, the mRNA and conformational changes in the ribosome. This Bradyrhizobium sp. (strain BTAi1 / ATCC BAA-1182) protein is Elongation factor G.